We begin with the raw amino-acid sequence, 193 residues long: Peptidyl-tRNA hydrolase (193 aa).

Tyr-15 provides a ligand contact to tRNA. The active-site Proton acceptor is His-20. TRNA-binding residues include Phe-65, Asn-67, and Asn-113.

Belongs to the PTH family. As to quaternary structure, monomer.

Its subcellular location is the cytoplasm. The catalysed reaction is an N-acyl-L-alpha-aminoacyl-tRNA + H2O = an N-acyl-L-amino acid + a tRNA + H(+). In terms of biological role, hydrolyzes ribosome-free peptidyl-tRNAs (with 1 or more amino acids incorporated), which drop off the ribosome during protein synthesis, or as a result of ribosome stalling. Functionally, catalyzes the release of premature peptidyl moieties from peptidyl-tRNA molecules trapped in stalled 50S ribosomal subunits, and thus maintains levels of free tRNAs and 50S ribosomes. The polypeptide is Peptidyl-tRNA hydrolase (Ehrlichia canis (strain Jake)).